A 175-amino-acid polypeptide reads, in one-letter code: Shikimate kinase (175 aa).

14–19 (GAGKST) is an ATP binding site. Ser-18 contributes to the Mg(2+) binding site. Residues Asp-36, Arg-60, and Gly-82 each coordinate substrate. Arg-120 contacts ATP. Arg-140 provides a ligand contact to substrate. Gln-157 lines the ATP pocket.

It belongs to the shikimate kinase family. As to quaternary structure, monomer. Mg(2+) is required as a cofactor.

The protein localises to the cytoplasm. It catalyses the reaction shikimate + ATP = 3-phosphoshikimate + ADP + H(+). The protein operates within metabolic intermediate biosynthesis; chorismate biosynthesis; chorismate from D-erythrose 4-phosphate and phosphoenolpyruvate: step 5/7. Catalyzes the specific phosphorylation of the 3-hydroxyl group of shikimic acid using ATP as a cosubstrate. In Mannheimia succiniciproducens (strain KCTC 0769BP / MBEL55E), this protein is Shikimate kinase.